The sequence spans 244 residues: Ribonuclease 3 (244 aa).

An RNase III domain is found at 21-148 (DHAPLLEAWG…MLGAIYLHHG (128 aa)). Glutamate 61 lines the Mg(2+) pocket. Aspartate 65 is an active-site residue. 2 residues coordinate Mg(2+): aspartate 134 and glutamate 137. Residue glutamate 137 is part of the active site. Positions 175–242 (DWKTVLLEKL…AKQAVQKLNE (68 aa)) constitute a DRBM domain.

It belongs to the ribonuclease III family. As to quaternary structure, homodimer. The cofactor is Mg(2+).

It localises to the cytoplasm. It catalyses the reaction Endonucleolytic cleavage to 5'-phosphomonoester.. Digests double-stranded RNA. Involved in the processing of primary rRNA transcript to yield the immediate precursors to the large and small rRNAs (23S and 16S). Processes some mRNAs, and tRNAs when they are encoded in the rRNA operon. Processes pre-crRNA and tracrRNA of type II CRISPR loci if present in the organism. The protein is Ribonuclease 3 of Corynebacterium jeikeium (strain K411).